We begin with the raw amino-acid sequence, 301 residues long: Coiled-coil domain-containing protein 69-B (301 aa).

Residues 1 to 43 are disordered; it reads MGSKTSKMCCPQLRKKKRQKAHKEGPSSQELNDLNAKSQGPNE. Gly2 carries N-myristoyl glycine lipidation. Residues 26 to 41 show a composition bias toward polar residues; that stretch reads PSSQELNDLNAKSQGP. 2 coiled-coil regions span residues 42–167 and 213–281; these read NELL…SILS and KSTM…NLYR.

The protein belongs to the CCDC69 family.

Its subcellular location is the cytoplasm. The protein resides in the cytoskeleton. It is found in the spindle. It localises to the midbody. Functionally, may act as a scaffold to regulate the recruitment and assembly of spindle midzone components. This chain is Coiled-coil domain-containing protein 69-B (ccdc69-b), found in Xenopus laevis (African clawed frog).